The chain runs to 222 residues: Small ribosomal subunit protein uS2 (222 aa).

This sequence belongs to the universal ribosomal protein uS2 family.

The sequence is that of Small ribosomal subunit protein uS2 from Karelsulcia muelleri (strain GWSS) (Sulcia muelleri).